The following is a 357-amino-acid chain: Cobalt-precorrin-5B C(1)-methyltransferase (357 aa).

The protein belongs to the CbiD family.

The enzyme catalyses Co-precorrin-5B + S-adenosyl-L-methionine = Co-precorrin-6A + S-adenosyl-L-homocysteine. It participates in cofactor biosynthesis; adenosylcobalamin biosynthesis; cob(II)yrinate a,c-diamide from sirohydrochlorin (anaerobic route): step 6/10. Its function is as follows. Catalyzes the methylation of C-1 in cobalt-precorrin-5B to form cobalt-precorrin-6A. This is Cobalt-precorrin-5B C(1)-methyltransferase from Rhodospirillum rubrum (strain ATCC 11170 / ATH 1.1.1 / DSM 467 / LMG 4362 / NCIMB 8255 / S1).